The following is a 229-amino-acid chain: 2-C-methyl-D-erythritol 4-phosphate cytidylyltransferase (229 aa).

It belongs to the IspD/TarI cytidylyltransferase family. IspD subfamily.

The enzyme catalyses 2-C-methyl-D-erythritol 4-phosphate + CTP + H(+) = 4-CDP-2-C-methyl-D-erythritol + diphosphate. Its pathway is isoprenoid biosynthesis; isopentenyl diphosphate biosynthesis via DXP pathway; isopentenyl diphosphate from 1-deoxy-D-xylulose 5-phosphate: step 2/6. Catalyzes the formation of 4-diphosphocytidyl-2-C-methyl-D-erythritol from CTP and 2-C-methyl-D-erythritol 4-phosphate (MEP). The polypeptide is 2-C-methyl-D-erythritol 4-phosphate cytidylyltransferase (Neisseria gonorrhoeae (strain NCCP11945)).